Consider the following 291-residue polypeptide: Beta-lactamase CTX-M-97 (291 aa).

Residues 1–28 (MMTQSIGRSMLTVMATLPLLFSSATLHA) form the signal peptide. Ser-73 acts as the Acyl-ester intermediate in catalysis. Residue 237 to 239 (KTG) coordinates substrate.

The protein belongs to the class-A beta-lactamase family.

The catalysed reaction is a beta-lactam + H2O = a substituted beta-amino acid. Functionally, is probably capable of hydrolyzing cephalosporins such as ceftriaxone and ceftazidime, thus conferring resistance to these antibiotics. This Escherichia coli protein is Beta-lactamase CTX-M-97 (bla).